Here is a 1115-residue protein sequence, read N- to C-terminus: Tbc2 translation factor, chloroplastic (1115 aa).

Low complexity-rich tracts occupy residues 69-87 and 163-175; these read TASVPSTSGASPSGSQLSS and RRAGSGASTSGRA. 2 disordered regions span residues 69–90 and 163–210; these read TASVPSTSGASPSGSQLSSKAL and RRAG…SSSS. Over residues 176–186 the composition is skewed to gly residues; the sequence is RGWGSGPGRNG. Over residues 187 to 210 the composition is skewed to low complexity; it reads SGSSSVSVNGSGSSSNGSSSSSSS. 9 tandem repeats follow at residues 483–521, 607–645, 685–723, 724–763, 764–803, 804–842, 843–880, 990–1029, and 1030–1068. The 9 X 38 AA approximate repeats stretch occupies residues 483-1068; that stretch reads LVLELSRARL…LRPPPEWLQA (586 aa).

As to quaternary structure, part of a 400 kDa complex which is not stably associated with RNA.

The protein localises to the plastid. It is found in the chloroplast stroma. In terms of biological role, required for expression of the chloroplast encoded psbC mRNA, most likely for translation initiation. Interacts with the 5'-UTR of psbC. In Chlamydomonas reinhardtii (Chlamydomonas smithii), this protein is Tbc2 translation factor, chloroplastic (TBC2).